A 295-amino-acid chain; its full sequence is Bifunctional protein FolD (295 aa).

NADP(+) contacts are provided by residues 166 to 168, S191, and I232; that span reads GRS.

It belongs to the tetrahydrofolate dehydrogenase/cyclohydrolase family. As to quaternary structure, homodimer.

It carries out the reaction (6R)-5,10-methylene-5,6,7,8-tetrahydrofolate + NADP(+) = (6R)-5,10-methenyltetrahydrofolate + NADPH. It catalyses the reaction (6R)-5,10-methenyltetrahydrofolate + H2O = (6R)-10-formyltetrahydrofolate + H(+). It functions in the pathway one-carbon metabolism; tetrahydrofolate interconversion. Functionally, catalyzes the oxidation of 5,10-methylenetetrahydrofolate to 5,10-methenyltetrahydrofolate and then the hydrolysis of 5,10-methenyltetrahydrofolate to 10-formyltetrahydrofolate. In Rhodopseudomonas palustris (strain HaA2), this protein is Bifunctional protein FolD.